A 451-amino-acid chain; its full sequence is Bifunctional protein GlmU (451 aa).

The interval 1–225 (MSLAVVILAA…EFEIQGVNDR (225 aa)) is pyrophosphorylase. Residues 8-11 (LAAG), Lys-22, Gln-73, 78-79 (GT), 99-101 (YGD), Gly-135, Glu-150, Asn-165, and Asn-223 contribute to the UDP-N-acetyl-alpha-D-glucosamine site. Asp-101 lines the Mg(2+) pocket. Asn-223 is a binding site for Mg(2+). A linker region spans residues 226-246 (IQLAQLEREWQKHIAEVIMSK). Positions 247–451 (GVSVADPSRI…IDTWQRPVKK (205 aa)) are N-acetyltransferase. UDP-N-acetyl-alpha-D-glucosamine-binding residues include Arg-329 and Lys-347. His-359 (proton acceptor) is an active-site residue. Tyr-362 and Asn-373 together coordinate UDP-N-acetyl-alpha-D-glucosamine. Acetyl-CoA-binding positions include Ala-376, 382–383 (NY), Ser-401, Ala-419, and Arg-436.

It in the N-terminal section; belongs to the N-acetylglucosamine-1-phosphate uridyltransferase family. The protein in the C-terminal section; belongs to the transferase hexapeptide repeat family. Homotrimer. The cofactor is Mg(2+).

It localises to the cytoplasm. The catalysed reaction is alpha-D-glucosamine 1-phosphate + acetyl-CoA = N-acetyl-alpha-D-glucosamine 1-phosphate + CoA + H(+). It carries out the reaction N-acetyl-alpha-D-glucosamine 1-phosphate + UTP + H(+) = UDP-N-acetyl-alpha-D-glucosamine + diphosphate. The protein operates within nucleotide-sugar biosynthesis; UDP-N-acetyl-alpha-D-glucosamine biosynthesis; N-acetyl-alpha-D-glucosamine 1-phosphate from alpha-D-glucosamine 6-phosphate (route II): step 2/2. Its pathway is nucleotide-sugar biosynthesis; UDP-N-acetyl-alpha-D-glucosamine biosynthesis; UDP-N-acetyl-alpha-D-glucosamine from N-acetyl-alpha-D-glucosamine 1-phosphate: step 1/1. It functions in the pathway bacterial outer membrane biogenesis; LPS lipid A biosynthesis. Its function is as follows. Catalyzes the last two sequential reactions in the de novo biosynthetic pathway for UDP-N-acetylglucosamine (UDP-GlcNAc). The C-terminal domain catalyzes the transfer of acetyl group from acetyl coenzyme A to glucosamine-1-phosphate (GlcN-1-P) to produce N-acetylglucosamine-1-phosphate (GlcNAc-1-P), which is converted into UDP-GlcNAc by the transfer of uridine 5-monophosphate (from uridine 5-triphosphate), a reaction catalyzed by the N-terminal domain. This chain is Bifunctional protein GlmU, found in Francisella philomiragia subsp. philomiragia (strain ATCC 25017 / CCUG 19701 / FSC 153 / O#319-036).